The primary structure comprises 99 residues: DNA-directed RNA polymerase subunit omega (99 aa).

The interval 55 to 99 (EAGTVISDPNPEEKRERLRIEREERKRQREQEQKELENRLRDEKN) is disordered. Positions 65 to 99 (PEEKRERLRIEREERKRQREQEQKELENRLRDEKN) are enriched in basic and acidic residues.

Belongs to the RNA polymerase subunit omega family. The RNAP catalytic core consists of 2 alpha, 1 beta, 1 beta' and 1 omega subunit. When a sigma factor is associated with the core the holoenzyme is formed, which can initiate transcription.

It catalyses the reaction RNA(n) + a ribonucleoside 5'-triphosphate = RNA(n+1) + diphosphate. Promotes RNA polymerase assembly. Latches the N- and C-terminal regions of the beta' subunit thereby facilitating its interaction with the beta and alpha subunits. This is DNA-directed RNA polymerase subunit omega from Enterococcus faecalis (strain ATCC 700802 / V583).